A 221-amino-acid chain; its full sequence is Max dimerization protein 1 (221 aa).

A Nuclear localization signal motif is present at residues 21–49 (RREREAEHGYASMLPYNSKERDGLKRKSK). 2 disordered regions span residues 29-67 (GYASMLPYNSKERDGLKRKSKSKKSSSSRSTHNEMEKNR) and 178-221 (SSSS…SIAL). One can recognise a bHLH domain in the interval 55 to 107 (SSRSTHNEMEKNRRAHLRLCLEKLKMLVPLGPESNRHTTLSLLMRAKLHIKKL). Residues 193–221 (MQSICSDEGYSSSGLKSIGLQNNPKSIAL) are compositionally biased toward polar residues.

As to quaternary structure, heterodimer with MAX; the interaction is required for DNA-binding. DNA binding requires dimerization with another bHLH protein; does not form homodimers, and does not bind to DNA in the absence of MAX in vitro. In terms of tissue distribution, expressed primarily in cells that have undergone terminal differentiation including notochord, floor plate and cement gland.

It localises to the nucleus. Functionally, component of a transcriptional repressor complex together with MAX. In complex with MAX binds to the core DNA sequence 5'-CAC[GA]TG-3'. Antagonizes MYC transcriptional activity by competing with MYC for MAX binding. Binds to the TERT promoter and represses telomerase expression, possibly by interfering with MYC binding. The polypeptide is Max dimerization protein 1 (mxd1) (Xenopus laevis (African clawed frog)).